A 257-amino-acid chain; its full sequence is Major prion protein (257 aa).

The N-terminal stretch at 1–24 (MVKSHIGGWILLLFVATWSDVGLC) is a signal peptide. Residues 25–234 (KKRPKPGGWN…ESEAYYQRGA (210 aa)) form an interaction with GRB2, ERI3 and SYN1 region. The segment at 28 to 110 (PKPGGWNTGG…GQWGKPNKPK (83 aa)) is disordered. Gly residues-rich tracts occupy residues 33-48 (WNTGGGSRYPGQGSPG) and 55-101 (QGGG…GSHG). Repeat copies occupy residues 54-62 (PQGGGGWGQ), 63-70 (PHGGGWGQ), 71-78 (PHGGGWGQ), 79-86 (PHGGGWGQ), and 87-95 (PHGGGGWGQ). Residues 54 to 95 (PQGGGGWGQPHGGGWGQPHGGGWGQPHGGGWGQPHGGGGWGQ) form a 5 X 8 AA tandem repeats of P-H-G-G-G-W-G-Q region. Residues His64, Gly65, Gly66, His72, Gly73, Gly74, His80, Gly81, Gly82, His88, Gly90, and Gly91 each contribute to the Cu(2+) site. A disulfide bond links Cys183 and Cys218. N-linked (GlcNAc...) asparagine glycosylation is found at Asn185 and Asn201. Residue Ala234 is the site of GPI-anchor amidated alanine attachment. A propeptide spans 235-257 (SAILFSPPPVILLISLLILLIVG) (removed in mature form).

The protein belongs to the prion family. Monomer and homodimer. Has a tendency to aggregate into amyloid fibrils containing a cross-beta spine, formed by a steric zipper of superposed beta-strands. Soluble oligomers may represent an intermediate stage on the path to fibril formation. Copper binding may promote oligomerization. Interacts with GRB2, APP, ERI3/PRNPIP and SYN1. Mislocalized cytosolically exposed PrP interacts with MGRN1; this interaction alters MGRN1 subcellular location and causes lysosomal enlargement. Interacts with KIAA1191.

It localises to the cell membrane. Its subcellular location is the golgi apparatus. Its primary physiological function is unclear. Has cytoprotective activity against internal or environmental stresses. May play a role in neuronal development and synaptic plasticity. May be required for neuronal myelin sheath maintenance. May play a role in iron uptake and iron homeostasis. Soluble oligomers are toxic to cultured neuroblastoma cells and induce apoptosis (in vitro). Association with GPC1 (via its heparan sulfate chains) targets PRNP to lipid rafts. Also provides Cu(2+) or Zn(2+) for the ascorbate-mediated GPC1 deaminase degradation of its heparan sulfate side chains. The polypeptide is Major prion protein (Vulpes lagopus (Arctic fox)).